The chain runs to 204 residues: Thiamine-phosphate synthase (204 aa).

4-amino-2-methyl-5-(diphosphooxymethyl)pyrimidine is bound by residues 34-38 (QYRDK) and aspartate 66. The Mg(2+) site is built by aspartate 67 and aspartate 86. 4-amino-2-methyl-5-(diphosphooxymethyl)pyrimidine is bound at residue serine 104. A 2-[(2R,5Z)-2-carboxy-4-methylthiazol-5(2H)-ylidene]ethyl phosphate-binding site is contributed by 131-133 (TST). A 4-amino-2-methyl-5-(diphosphooxymethyl)pyrimidine-binding site is contributed by lysine 134. Residues glycine 160 and 180-181 (VS) contribute to the 2-[(2R,5Z)-2-carboxy-4-methylthiazol-5(2H)-ylidene]ethyl phosphate site.

The protein belongs to the thiamine-phosphate synthase family. The cofactor is Mg(2+).

It catalyses the reaction 2-[(2R,5Z)-2-carboxy-4-methylthiazol-5(2H)-ylidene]ethyl phosphate + 4-amino-2-methyl-5-(diphosphooxymethyl)pyrimidine + 2 H(+) = thiamine phosphate + CO2 + diphosphate. The catalysed reaction is 2-(2-carboxy-4-methylthiazol-5-yl)ethyl phosphate + 4-amino-2-methyl-5-(diphosphooxymethyl)pyrimidine + 2 H(+) = thiamine phosphate + CO2 + diphosphate. The enzyme catalyses 4-methyl-5-(2-phosphooxyethyl)-thiazole + 4-amino-2-methyl-5-(diphosphooxymethyl)pyrimidine + H(+) = thiamine phosphate + diphosphate. The protein operates within cofactor biosynthesis; thiamine diphosphate biosynthesis; thiamine phosphate from 4-amino-2-methyl-5-diphosphomethylpyrimidine and 4-methyl-5-(2-phosphoethyl)-thiazole: step 1/1. Its function is as follows. Condenses 4-methyl-5-(beta-hydroxyethyl)thiazole monophosphate (THZ-P) and 2-methyl-4-amino-5-hydroxymethyl pyrimidine pyrophosphate (HMP-PP) to form thiamine monophosphate (TMP). The chain is Thiamine-phosphate synthase from Picrophilus torridus (strain ATCC 700027 / DSM 9790 / JCM 10055 / NBRC 100828 / KAW 2/3).